The following is a 196-amino-acid chain: Probable malonic semialdehyde reductase RutE (196 aa).

The protein belongs to the nitroreductase family. HadB/RutE subfamily. FMN serves as cofactor.

It catalyses the reaction 3-hydroxypropanoate + NADP(+) = 3-oxopropanoate + NADPH + H(+). In terms of biological role, may reduce toxic product malonic semialdehyde to 3-hydroxypropionic acid, which is excreted. The polypeptide is Probable malonic semialdehyde reductase RutE (Shigella sonnei (strain Ss046)).